Here is a 738-residue protein sequence, read N- to C-terminus: Photosystem I P700 chlorophyll a apoprotein A2 (738 aa).

Helical transmembrane passes span 46-69, 135-158, 175-199, 273-291, 333-356, 372-398, 420-442, and 521-539; these read LFST…FHIA, LYQG…LHLQ, LNHH…HVAI, IAHH…GHMY, LHFQ…QHMY, AALY…IFFI, AIIS…LYVH, and FLVH…LILV. Cys563 and Cys572 together coordinate [4Fe-4S] cluster. Transmembrane regions (helical) follow at residues 579-600 and 647-669; these read AFYL…YWHW and LAVW…MFLI. Positions 658, 666, and 674 each coordinate chlorophyll a. Residue Trp675 coordinates phylloquinone. Residues 711 to 731 traverse the membrane as a helical segment; that stretch reads VVGLAHFTVGYVLTYGAFLIA.

Belongs to the PsaA/PsaB family. As to quaternary structure, the PsaA/B heterodimer binds the P700 chlorophyll special pair and subsequent electron acceptors. PSI consists of a core antenna complex that captures photons, and an electron transfer chain that converts photonic excitation into a charge separation. The cyanobacterial PSI reaction center is composed of one copy each of PsaA,B,C,D,E,F,I,J,K,L,M and X, and forms trimeric complexes. Requires PSI electron transfer chain: 5 chlorophyll a, 1 chlorophyll a', 2 phylloquinones and 3 4Fe-4S clusters. PSI core antenna: 90 chlorophyll a, 22 carotenoids, 3 phospholipids and 1 galactolipid. P700 is a chlorophyll a/chlorophyll a' dimer, A0 is one or more chlorophyll a, A1 is one or both phylloquinones and FX is a shared 4Fe-4S iron-sulfur center. as cofactor.

It localises to the cellular thylakoid membrane. The enzyme catalyses reduced [plastocyanin] + hnu + oxidized [2Fe-2S]-[ferredoxin] = oxidized [plastocyanin] + reduced [2Fe-2S]-[ferredoxin]. Functionally, psaA and PsaB bind P700, the primary electron donor of photosystem I (PSI), as well as the electron acceptors A0, A1 and FX. PSI is a plastocyanin/cytochrome c6-ferredoxin oxidoreductase, converting photonic excitation into a charge separation, which transfers an electron from the donor P700 chlorophyll pair to the spectroscopically characterized acceptors A0, A1, FX, FA and FB in turn. Oxidized P700 is reduced on the lumenal side of the thylakoid membrane by plastocyanin or cytochrome c6. The protein is Photosystem I P700 chlorophyll a apoprotein A2 of Synechococcus sp. (strain CC9311).